Reading from the N-terminus, the 630-residue chain is Probable potassium transport system protein Kup 1 (630 aa).

12 helical membrane passes run 15 to 35 (FAAL…TSPL), 59 to 79 (LSLI…TFIM), 109 to 129 (WIMI…MVTP), 145 to 165 (PALK…LFFV), 173 to 193 (VGAF…LLGV), 223 to 243 (LVAM…YADM), 255 to 275 (WFAF…ALIL), 297 to 317 (LVGL…SGAF), 345 to 365 (IYLP…VLGF), 374 to 394 (AYGI…TVVV), 405 to 425 (AGLL…ANIL), and 427 to 447 (IPDG…LMTT).

This sequence belongs to the HAK/KUP transporter (TC 2.A.72) family.

It is found in the cell inner membrane. The catalysed reaction is K(+)(in) + H(+)(in) = K(+)(out) + H(+)(out). Transport of potassium into the cell. Likely operates as a K(+):H(+) symporter. This chain is Probable potassium transport system protein Kup 1, found in Dechloromonas aromatica (strain RCB).